A 92-amino-acid chain; its full sequence is UPF0473 protein BCE33L4129 (92 aa).

Belongs to the UPF0473 family.

This is UPF0473 protein BCE33L4129 from Bacillus cereus (strain ZK / E33L).